The sequence spans 250 residues: Triosephosphate isomerase (250 aa).

9 to 11 lines the substrate pocket; sequence NWK. The active-site Electrophile is the His-96. Glu-168 serves as the catalytic Proton acceptor. Substrate contacts are provided by residues Gly-174, Ser-216, and 237–238; that span reads GG.

It belongs to the triosephosphate isomerase family. In terms of assembly, homodimer.

The protein resides in the cytoplasm. It carries out the reaction D-glyceraldehyde 3-phosphate = dihydroxyacetone phosphate. It functions in the pathway carbohydrate biosynthesis; gluconeogenesis. It participates in carbohydrate degradation; glycolysis; D-glyceraldehyde 3-phosphate from glycerone phosphate: step 1/1. Its function is as follows. Involved in the gluconeogenesis. Catalyzes stereospecifically the conversion of dihydroxyacetone phosphate (DHAP) to D-glyceraldehyde-3-phosphate (G3P). The sequence is that of Triosephosphate isomerase from Leptospira borgpetersenii serovar Hardjo-bovis (strain JB197).